A 49-amino-acid chain; its full sequence is MKLNAFHLVVVVLIVSIFSVSSEDQTNGDIEYIDSNKISSYNDELCKDI.

A signal peptide spans 1-22 (MKLNAFHLVVVVLIVSIFSVSS).

Its subcellular location is the secreted. This is an uncharacterized protein from Dictyostelium discoideum (Social amoeba).